Reading from the N-terminus, the 316-residue chain is MVNQSSPMGFLLLGFSEHPALERTLFVVVFTSYLLTLVGNTLIILLSVLYPRLHSPMYFFLSDLSFLDLCFTTSCVPQMLVNLWGPKKTISFLGCSVQLFIFLSLGTTECILLTVMAFDRYVAVCQPLHYATIIHPRLCWQLASVAWVMSLVQSIVQTPSTLHLPFCPHQQIDDFLCEVPSLIRLSCGDTSYNEIQLAVSSVIFVVVPLSLILASYGATAQAVLRINSATAWRKAFGTCSSHLTVVTLFYSSVIAVYLQPKNPYAQGRGKFFGLFYAVGTPSLNPLVYTLRNKEIKRALRRLLGKERDSRESWRAA.

The Extracellular portion of the chain corresponds to 1–23 (MVNQSSPMGFLLLGFSEHPALER). A glycan (N-linked (GlcNAc...) asparagine) is linked at N3. The chain crosses the membrane as a helical span at residues 24-47 (TLFVVVFTSYLLTLVGNTLIILLS). Residues 48–55 (VLYPRLHS) are Cytoplasmic-facing. Residues 56 to 77 (PMYFFLSDLSFLDLCFTTSCVP) form a helical membrane-spanning segment. Topologically, residues 78–98 (QMLVNLWGPKKTISFLGCSVQ) are extracellular. A disulfide bridge links C95 with C187. Residues 99-118 (LFIFLSLGTTECILLTVMAF) traverse the membrane as a helical segment. The Cytoplasmic segment spans residues 119–137 (DRYVAVCQPLHYATIIHPR). The chain crosses the membrane as a helical span at residues 138–156 (LCWQLASVAWVMSLVQSIV). The Extracellular segment spans residues 157–193 (QTPSTLHLPFCPHQQIDDFLCEVPSLIRLSCGDTSYN). A helical membrane pass occupies residues 194-217 (EIQLAVSSVIFVVVPLSLILASYG). Topologically, residues 218–234 (ATAQAVLRINSATAWRK) are cytoplasmic. Residues 235–257 (AFGTCSSHLTVVTLFYSSVIAVY) form a helical membrane-spanning segment. At 258–270 (LQPKNPYAQGRGK) the chain is on the extracellular side. The chain crosses the membrane as a helical span at residues 271 to 290 (FFGLFYAVGTPSLNPLVYTL). Over 291–316 (RNKEIKRALRRLLGKERDSRESWRAA) the chain is Cytoplasmic.

This sequence belongs to the G-protein coupled receptor 1 family.

The protein localises to the cell membrane. Its function is as follows. Odorant receptor. The polypeptide is Olfactory receptor 2H1 (OR2H1) (Homo sapiens (Human)).